The following is a 317-amino-acid chain: Melanocyte-stimulating hormone receptor (317 aa).

At 1 to 37 (MPVQGSQRRLLGSLNSTPTATPHLGLAANQTGARCLE) the chain is on the extracellular side. The N-linked (GlcNAc...) asparagine glycan is linked to N29. A helical transmembrane segment spans residues 38–63 (MSIPDGLFLSLGLVSLVENVLVVTAI). The Cytoplasmic portion of the chain corresponds to 64 to 72 (AKNRNLHSP). Residues 73-93 (MYCFICCLALSDLLVSGSNML) traverse the membrane as a helical segment. Topologically, residues 94 to 118 (ETAVTLLLEAGALAARAAVVQQLDN) are extracellular. The chain crosses the membrane as a helical span at residues 119 to 140 (VIDVITCSSMLSSLCFLGAIAV). Topologically, residues 141-163 (DRYISIFYALRYHSIVTLPRARR) are cytoplasmic. The helical transmembrane segment at 164–183 (AIAAIWVASVLCSTLFIAYY) threads the bilayer. At 184–191 (DHAAVLLC) the chain is on the extracellular side. A helical membrane pass occupies residues 192–211 (LVVFFLAMLVLMAVLYVHML). The Cytoplasmic segment spans residues 212-240 (ARACQHAQGIARLHKRQRLAHQGFGLKGA). A helical membrane pass occupies residues 241-266 (ATLTILLGIFFLCWGPFFLHLTLIVL). Residues 267-279 (CPQHPTCSCIFKN) lie on the Extracellular side of the membrane. A helical membrane pass occupies residues 280–300 (FNLFLTLIICNAIIDPLIYAF). The Cytoplasmic segment spans residues 301 to 317 (RSQELRRTLKEVLLCSW). C315 carries S-palmitoyl cysteine lipidation.

Belongs to the G-protein coupled receptor 1 family. Interacts with MGRN1, but does not undergo MGRN1-mediated ubiquitination; this interaction competes with GNAS-binding and thus inhibits agonist-induced cAMP production. Interacts with OPN3; the interaction results in a decrease in MC1R-mediated cAMP signaling and ultimately a decrease in melanin production in melanocytes.

The protein localises to the cell membrane. Receptor for MSH (alpha, beta and gamma) and ACTH. The activity of this receptor is mediated by G proteins which activate adenylate cyclase. Mediates melanogenesis, the production of eumelanin (black/brown) and phaeomelanin (red/yellow), via regulation of cAMP signaling in melanocytes. The sequence is that of Melanocyte-stimulating hormone receptor (MC1R) from Macaca nemestrina (Pig-tailed macaque).